The primary structure comprises 1196 residues: Truncated transposon Ty1-A Gag-Pol polyprotein (1196 aa).

Positions 101 to 276 (NSYEPFQYLH…AGLDISTLLP (176 aa)) constitute an Integrase catalytic domain. Mg(2+) is bound by residues Asp112 and Asp177. Disordered stretches follow at residues 397 to 528 (SKAV…ETEK), 533 to 552 (RSPS…NIVP), and 571 to 628 (DLPL…DNET). Over residues 401 to 410 (SPTDSTPPST) the composition is skewed to low complexity. Positions 446–456 (STPQISNIEST) are enriched in polar residues. Over residues 479–494 (ESSHASKSKDFRHSDS) the composition is skewed to basic and acidic residues. 2 stretches are compositionally biased toward polar residues: residues 495-523 (YSEN…QISD) and 542-552 (PENNSSHNIVP). Positions 619–653 (KKRSLEDNETEIKVSRDTWNTKNMRSLEPPRSKKR) match the Bipartite nuclear localization signal motif. In terms of domain architecture, Reverse transcriptase Ty1/copia-type spans 779-917 (NNYYITQLDI…DILGLEIKYQ (139 aa)). Positions 787, 868, 869, 1051, 1093, and 1126 each coordinate Mg(2+). In terms of domain architecture, RNase H Ty1/copia-type spans 1051 to 1193 (DASYGNQPYY…IKTFKLLTNK (143 aa)).

Initially, virus-like particles (VLPs) are composed of the structural unprocessed proteins Gag and Gag-Pol, and also contain the host initiator methionine tRNA (tRNA(i)-Met) which serves as a primer for minus-strand DNA synthesis, and a dimer of genomic Ty RNA. Processing of the polyproteins occurs within the particle and proceeds by an ordered pathway, called maturation. First, the protease (PR) is released by autocatalytic cleavage of the Gag-Pol polyprotein yielding capsid protein p45 and a Pol-p154 precursor protein. This cleavage is a prerequisite for subsequent processing of Pol-p154 at the remaining sites to release the mature structural and catalytic proteins. Maturation takes place prior to the RT reaction and is required to produce transposition-competent VLPs.

The protein resides in the cytoplasm. Its subcellular location is the nucleus. The catalysed reaction is DNA(n) + a 2'-deoxyribonucleoside 5'-triphosphate = DNA(n+1) + diphosphate. The enzyme catalyses Endonucleolytic cleavage to 5'-phosphomonoester.. Its function is as follows. Reverse transcriptase/ribonuclease H (RT) is a multifunctional enzyme that catalyzes the conversion of the retro-elements RNA genome into dsDNA within the VLP. The enzyme displays a DNA polymerase activity that can copy either DNA or RNA templates, and a ribonuclease H (RNase H) activity that cleaves the RNA strand of RNA-DNA heteroduplexes during plus-strand synthesis and hydrolyzes RNA primers. The conversion leads to a linear dsDNA copy of the retrotransposon that includes long terminal repeats (LTRs) at both ends. In terms of biological role, integrase (IN) targets the VLP to the nucleus, where a subparticle preintegration complex (PIC) containing at least integrase and the newly synthesized dsDNA copy of the retrotransposon must transit the nuclear membrane. Once in the nucleus, integrase performs the integration of the dsDNA into the host genome. This is Truncated transposon Ty1-A Gag-Pol polyprotein (TY1B-A) from Saccharomyces cerevisiae (strain ATCC 204508 / S288c) (Baker's yeast).